A 219-amino-acid chain; its full sequence is C-type lectin domain family 4 member E (219 aa).

The Cytoplasmic segment spans residues 1–19; that stretch reads MNSSKSSETQCTERGCFSS. Residues 20–40 traverse the membrane as a helical; Signal-anchor for type II membrane protein segment; it reads QMFLWTVAGIPILFLSACFIT. Topologically, residues 41 to 219 are extracellular; sequence RCVVTFRIFQ…INPLNKGKSL (179 aa). N62 is a glycosylation site (N-linked (GlcNAc...) asparagine). A disulfide bridge links C80 with C91. The 120-residue stretch at 87-206 folds into the C-type lectin domain; sequence FQSSCYFFST…CFLNYFRICE (120 aa). N-linked (GlcNAc...) asparagine glycosylation occurs at N107. 2 disulfide bridges follow: C108-C205 and C179-C197. The Ca(2+) site is built by V117, N119, E123, E169, N171, N193, D194, and E206. The Confers specificity for glucose/mannose-type carbohydrates signature appears at 169 to 171; it reads EPN.

As to quaternary structure, monomer and homodimer. Interacts with signaling adapter Fc receptor gamma chain/FCER1G to form a functional complex; the interaction is direct. Alternatively, acts as a bridge for interaction between CLEC4D and FCER1G. A heterodimer of CLEC4E and CLEC4D associates with FCER1G to form a functional complex. Interacts with SAP130 nuclear protein that is released from necrotic cells; the interaction is direct. Expressed in monocytes and macrophages.

The protein localises to the cell membrane. It localises to the cell projection. The protein resides in the phagocytic cup. Calcium-dependent lectin that acts as a pattern recognition receptor (PRR) of the innate immune system: recognizes damage-associated molecular patterns (DAMPs) of abnormal self and pathogen-associated molecular patterns (PAMPs) of bacteria and fungi. The PAMPs notably include mycobacterial trehalose 6,6'-dimycolate (TDM), a cell wall glycolipid with potent adjuvant immunomodulatory functions. Interacts with signaling adapter Fc receptor gamma chain/FCER1G to form a functional complex in myeloid cells. Binding of mycobacterial trehalose 6,6'-dimycolate (TDM) to this receptor complex leads to phosphorylation of the immunoreceptor tyrosine-based activation motif (ITAM) of FCER1G, triggering activation of SYK, CARD9 and NF-kappa-B, consequently driving maturation of antigen-presenting cells and shaping antigen-specific priming of T-cells toward effector T-helper 1 and T-helper 17 cell subtypes. Also recognizes alpha-mannose residues on pathogenic fungi of the genus Malassezia and mediates macrophage activation. Through recognition of DAMPs released upon nonhomeostatic cell death, enables immune sensing of damaged self and promotes inflammatory cell infiltration into the damaged tissue. This is C-type lectin domain family 4 member E from Homo sapiens (Human).